Here is a 107-residue protein sequence, read N- to C-terminus: Small ribosomal subunit protein uS17 (107 aa).

It belongs to the universal ribosomal protein uS17 family. Part of the 30S ribosomal subunit.

Functionally, one of the primary rRNA binding proteins, it binds specifically to the 5'-end of 16S ribosomal RNA. The protein is Small ribosomal subunit protein uS17 of Thermotoga maritima (strain ATCC 43589 / DSM 3109 / JCM 10099 / NBRC 100826 / MSB8).